The primary structure comprises 389 residues: Chalcone synthase 3 (389 aa).

C164 is an active-site residue.

The protein belongs to the thiolase-like superfamily. Chalcone/stilbene synthases family.

It catalyses the reaction (E)-4-coumaroyl-CoA + 3 malonyl-CoA + 3 H(+) = 2',4,4',6'-tetrahydroxychalcone + 3 CO2 + 4 CoA. It functions in the pathway secondary metabolite biosynthesis; flavonoid biosynthesis. Its function is as follows. The primary product of this enzyme is 4,2',4',6'-tetrahydroxychalcone (also termed naringenin-chalcone or chalcone) which can under specific conditions spontaneously isomerize into naringenin. The chain is Chalcone synthase 3 (CHS3) from Trifolium subterraneum (Subterranean clover).